Reading from the N-terminus, the 469-residue chain is Probable lysophospholipase BODYGUARD 1 (469 aa).

Positions 1–45 (MGFSRSLNRTVGVFVFFILDIVDFLLCFTYKTLDFFFESEWKPCY) are cleaved as a signal peptide. Cys46 carries N-palmitoyl cysteine lipidation. An AB hydrolase-1 domain is found at 185–439 (VVFIHGFLSS…IHVVPDKDHI (255 aa)). His189 is a catalytic residue. The active-site Nucleophile is the Ser263. Residues Asp410 and His438 each act as charge relay system in the active site.

Expressed exclusively in protodermal and epidermal cells of all organs, especially on adaxial sides.

It is found in the cell membrane. Its subcellular location is the secreted. The protein localises to the cell wall. Its function is as follows. Controls cuticle development and morphogenesis, by promoting cutin and suberin monomers loading. Involved in the regulation of abscissic acid (ABA) biosynthesis in response to osmotic stress. Plays an important role in osmotic stress and drought resistance. Required to ensure a reduced permeability of aerial tissue, thus preventing transpiration. Regulates lateral root hair development. In terms of biological role, required for infection by the pathogenic necrotrophic fungus Botrytis cinerea, probably by regulating structural traits of the cuticle. The protein is Probable lysophospholipase BODYGUARD 1 of Arabidopsis thaliana (Mouse-ear cress).